The following is a 229-amino-acid chain: ATP synthase subunit a (229 aa).

6 helical membrane-spanning segments follow: residues 25-45, 82-102, 104-124, 142-162, 181-201, and 202-222; these read ADAIAYTWLIIALLLILSMLA, FFPLIATLAIFILVSNLIGLV, GFFPPTANINTTAACAVIVFV, FLGPILWLAPMMFFIEVIGHF, LVLMIFFGLAPFLVPLPMMLM, and GVLVSFIQAFVFMLLAMIYIQ.

The protein belongs to the ATPase A chain family. As to quaternary structure, F-type ATPases have 2 components, CF(1) - the catalytic core - and CF(0) - the membrane proton channel. CF(1) has five subunits: alpha(3), beta(3), gamma(1), delta(1), epsilon(1). CF(0) has three main subunits: a(1), b(2) and c(9-12). The alpha and beta chains form an alternating ring which encloses part of the gamma chain. CF(1) is attached to CF(0) by a central stalk formed by the gamma and epsilon chains, while a peripheral stalk is formed by the delta and b chains.

It localises to the cell inner membrane. Its function is as follows. Key component of the proton channel; it plays a direct role in the translocation of protons across the membrane. The polypeptide is ATP synthase subunit a (Geotalea uraniireducens (strain Rf4) (Geobacter uraniireducens)).